Consider the following 323-residue polypeptide: Lipoyl synthase (323 aa).

[4Fe-4S] cluster contacts are provided by cysteine 61, cysteine 66, cysteine 72, cysteine 87, cysteine 91, cysteine 94, and serine 300. In terms of domain architecture, Radical SAM core spans 73–289 (WDKKHATFMI…ETVAYSKGFL (217 aa)).

This sequence belongs to the radical SAM superfamily. Lipoyl synthase family. Requires [4Fe-4S] cluster as cofactor.

The protein resides in the cytoplasm. It catalyses the reaction [[Fe-S] cluster scaffold protein carrying a second [4Fe-4S](2+) cluster] + N(6)-octanoyl-L-lysyl-[protein] + 2 oxidized [2Fe-2S]-[ferredoxin] + 2 S-adenosyl-L-methionine + 4 H(+) = [[Fe-S] cluster scaffold protein] + N(6)-[(R)-dihydrolipoyl]-L-lysyl-[protein] + 4 Fe(3+) + 2 hydrogen sulfide + 2 5'-deoxyadenosine + 2 L-methionine + 2 reduced [2Fe-2S]-[ferredoxin]. Its pathway is protein modification; protein lipoylation via endogenous pathway; protein N(6)-(lipoyl)lysine from octanoyl-[acyl-carrier-protein]: step 2/2. Its function is as follows. Catalyzes the radical-mediated insertion of two sulfur atoms into the C-6 and C-8 positions of the octanoyl moiety bound to the lipoyl domains of lipoate-dependent enzymes, thereby converting the octanoylated domains into lipoylated derivatives. This Rhizobium leguminosarum bv. trifolii (strain WSM2304) protein is Lipoyl synthase.